The following is a 266-amino-acid chain: GTP-binding protein Rhes (266 aa).

GTP is bound at residue 26–33; sequence GASRVGKS. Residues 48 to 56 carry the Effector region motif; that stretch reads YTPTIEDFH. GTP is bound by residues 73 to 77 and 140 to 143; these read DTSGN and NKND. The interaction with GNB1, GNB2 and GNB3 stretch occupies residues 189 to 235; it reads MAKLPHEMSPALHHKISVQYGDAFHPRPFCMRRTKVAGAYGMVSPFA. C263 is subject to Cysteine methyl ester. Residue C263 is the site of S-farnesyl cysteine attachment. A propeptide spans 264–266 (removed in mature form); the sequence is SIQ.

It belongs to the small GTPase superfamily. RasD family. Monomer (Potential). Interacts with PIK3CA and UBE2I. Interacts with GNB1, GNB2 and GNB3. Post-translationally, farnesylated. Farnesylation is required for membrane targeting. As to expression, highly expressed in brain; prominently in the striatum and weakly in kidney, thyroid, lung, heart and testis. Not expressed in liver. Expressed in pancreatic cell lines and in a embryonic stem cell line.

It is found in the cell membrane. Its function is as follows. GTPase signaling protein that binds to and hydrolyzes GTP. Regulates signaling pathways involving G-proteins-coupled receptor and heterotrimeric proteins such as GNB1, GNB2 and GNB3. May be involved in selected striatal competencies, mainly locomotor activity and motor coordination. The sequence is that of GTP-binding protein Rhes (Rasd2) from Mus musculus (Mouse).